Consider the following 439-residue polypeptide: Acyl-coenzyme A thioesterase 9, mitochondrial (439 aa).

A mitochondrion-targeting transit peptide spans 1-21; the sequence is MRRAALRLCALGKGQLTPGRG. 2 consecutive HotDog ACOT-type domains span residues 84–209 and 289–401; these read KDSY…RDSE and ENSK…EKEV. Residue lysine 103 is modified to N6-acetyllysine.

It belongs to the acyl coenzyme A hydrolase family. As to quaternary structure, interacts with NYAP1, NYAP2 and MYO16.

It is found in the mitochondrion. Its subcellular location is the mitochondrion matrix. It localises to the mitochondrion inner membrane. It catalyses the reaction butanoyl-CoA + H2O = butanoate + CoA + H(+). It carries out the reaction propanoyl-CoA + H2O = propanoate + CoA + H(+). The catalysed reaction is hexadecanoyl-CoA + H2O = hexadecanoate + CoA + H(+). The enzyme catalyses octanoyl-CoA + H2O = octanoate + CoA + H(+). It catalyses the reaction decanoyl-CoA + H2O = decanoate + CoA + H(+). It carries out the reaction tetradecanoyl-CoA + H2O = tetradecanoate + CoA + H(+). The catalysed reaction is 4,8-dimethylnonanoyl-CoA + H2O = 4,8-dimethylnonanoate + CoA + H(+). The enzyme catalyses 3-methylbutanoyl-CoA + H2O = 3-methylbutanoate + CoA + H(+). It catalyses the reaction 2-methylpropanoyl-CoA + H2O = 2-methylpropanoate + CoA + H(+). Its pathway is lipid metabolism; fatty acid metabolism. With respect to regulation, strongly inhibited by NADH and CoA. In terms of biological role, mitochondrial acyl-CoA thioesterase. Catalyzes the hydrolysis of acyl-CoAs into free fatty acids and coenzyme A (CoA), regulating their respective intracellular levels. Regulates both mitochondrial lipid and amino acid metabolism. The sequence is that of Acyl-coenzyme A thioesterase 9, mitochondrial from Homo sapiens (Human).